Consider the following 260-residue polypeptide: LIM and SH3 domain protein 1 (260 aa).

At Met-1 the chain carries N-acetylmethionine. An LIM zinc-binding domain is found at 5-56 (CARCCKIVYPTEKVNCLDKFWHKACFHCETCKMTLNMKNYKGYEKKPYCNAH). Lys-42 carries the post-translational modification N6-acetyllysine. Nebulin repeat units follow at residues 61 to 95 (SFTMVADTPENLRLKQQSELQSQVRYKEEFEKNKG) and 97 to 131 (GFSVVADTPELQRIKKTQDQISNIKYHEEFEKSRM). A Phosphothreonine modification is found at Thr-68. Lys-75 bears the N6-methyllysine mark. Ser-99 bears the Phosphoserine mark. Thr-104 is subject to Phosphothreonine. The residue at position 112 (Lys-112) is an N6-succinyllysine. Residues Ser-118 and Ser-134 each carry the phosphoserine modification. The disordered stretch occupies residues 123-204 (HEEFEKSRMG…QRSAPGGGGK (82 aa)). The span at 140–155 (ECERRDPQESSYRRPQ) shows a compositional bias: basic and acidic residues. Residues 171–180 (QQPQQQPAAQ) show a composition bias toward low complexity. The 60-residue stretch at 201–260 (GGGKRYRAVYDYSAADEDEVSFQDGDTIVNVQQIDDGWMYGTVERTGDTGMLPANYVEAI) folds into the SH3 domain.

In terms of assembly, interacts with F-actin. Interacts with ANKRD54. Interacts with KBTBD10. In terms of processing, phosphorylated.

The protein localises to the cytoplasm. The protein resides in the cell cortex. It localises to the cytoskeleton. Its function is as follows. Plays an important role in the regulation of dynamic actin-based, cytoskeletal activities. Agonist-dependent changes in LASP1 phosphorylation may also serve to regulate actin-associated ion transport activities, not only in the parietal cell but also in certain other F-actin-rich secretory epithelial cell types. The chain is LIM and SH3 domain protein 1 (LASP1) from Bos taurus (Bovine).